Here is a 476-residue protein sequence, read N- to C-terminus: MKVSLPAFEKARVLVVGDVMLDRYWVGPTGRISPEAPVPVVKINQVEDRPGGAANVALNIATLGGQVQLAGLVGQDDTAIALTLGVQTLGVEPQWLSIADKPTITKLRVLSRNQQLIRLDFEEAFDKADSVRLLKQSEALLDSIDVVVLSDYAKGAIDQPRDFIALARSKGVMVLVDPKGSDFGRYHGASLITPNMSEFEAVVGTVTSEADLLEKARGLLKEHHFDAILVTRSEKGMTLVTANAPELHIPTVAREVYDVTGAGDTVISALATSLAAGADLPQACAIANTAAGVVVGKLGTSTVSRIELIEALALHHGESGFGVVSEDQLAYALEQAKLRGERVVMTNGCFDILHAGHVSYLKQAKALGDRLIVAVNDDASVKRLKGEGRPVNQVDRRMAVLAGLASVDWVVPFSEDTPQRIIARLLPDLLVKGGDYKIEDIAGGAEVIAAGGQVQVLGFEDGISTTAIIQNIMANQ.

Residues 1 to 319 (MKVSLPAFEK…EALALHHGES (319 aa)) form a ribokinase region. 195 to 198 (NMSE) lines the ATP pocket. Residue Asp-264 is part of the active site. The tract at residues 345 to 476 (MTNGCFDILH…AIIQNIMANQ (132 aa)) is cytidylyltransferase.

The protein in the N-terminal section; belongs to the carbohydrate kinase PfkB family. It in the C-terminal section; belongs to the cytidylyltransferase family. Homodimer.

It catalyses the reaction D-glycero-beta-D-manno-heptose 7-phosphate + ATP = D-glycero-beta-D-manno-heptose 1,7-bisphosphate + ADP + H(+). The catalysed reaction is D-glycero-beta-D-manno-heptose 1-phosphate + ATP + H(+) = ADP-D-glycero-beta-D-manno-heptose + diphosphate. It functions in the pathway nucleotide-sugar biosynthesis; ADP-L-glycero-beta-D-manno-heptose biosynthesis; ADP-L-glycero-beta-D-manno-heptose from D-glycero-beta-D-manno-heptose 7-phosphate: step 1/4. The protein operates within nucleotide-sugar biosynthesis; ADP-L-glycero-beta-D-manno-heptose biosynthesis; ADP-L-glycero-beta-D-manno-heptose from D-glycero-beta-D-manno-heptose 7-phosphate: step 3/4. Functionally, catalyzes the phosphorylation of D-glycero-D-manno-heptose 7-phosphate at the C-1 position to selectively form D-glycero-beta-D-manno-heptose-1,7-bisphosphate. In terms of biological role, catalyzes the ADP transfer from ATP to D-glycero-beta-D-manno-heptose 1-phosphate, yielding ADP-D-glycero-beta-D-manno-heptose. The polypeptide is Bifunctional protein HldE (Shewanella sp. (strain W3-18-1)).